The primary structure comprises 179 residues: MVQAWYMDESTADPRMPHRAQPDRPVGLEQLRTLGVLYWKLDADKYENDPELEQIRKTRNYSWMDIITICKDSLPNYEEKIKMFFEEHLHLDEEIRYILEGSGYFDVRDKEDKWIRISMEKGDMITLPAGIYHRFTLDEKNYVKAMRLFVGEPVWTPYNRPADHFDARVQYVKFLEGTA.

A disordered region spans residues methionine 1 to aspartate 23. Residues histidine 88, histidine 90, glutamate 94, and histidine 133 each coordinate Fe(2+). Ni(2+)-binding residues include histidine 88, histidine 90, glutamate 94, and histidine 133.

This sequence belongs to the acireductone dioxygenase (ARD) family. In terms of assembly, monomer. Interacts with MMP14. Fe(2+) serves as cofactor. Ni(2+) is required as a cofactor. Detected in prostate, liver, heart, brain, muscle, kidney and seminal vesicles.

The protein resides in the cytoplasm. It localises to the nucleus. It is found in the cell membrane. The catalysed reaction is 1,2-dihydroxy-5-(methylsulfanyl)pent-1-en-3-one + O2 = 4-methylsulfanyl-2-oxobutanoate + formate + 2 H(+). It carries out the reaction 1,2-dihydroxy-5-(methylsulfanyl)pent-1-en-3-one + O2 = 3-(methylsulfanyl)propanoate + CO + formate + 2 H(+). It participates in amino-acid biosynthesis; L-methionine biosynthesis via salvage pathway; L-methionine from S-methyl-5-thio-alpha-D-ribose 1-phosphate: step 5/6. In terms of biological role, catalyzes 2 different reactions between oxygen and the acireductone 1,2-dihydroxy-3-keto-5-methylthiopentene (DHK-MTPene) depending upon the metal bound in the active site. Fe-containing acireductone dioxygenase (Fe-ARD) produces formate and 2-keto-4-methylthiobutyrate (KMTB), the alpha-ketoacid precursor of methionine in the methionine recycle pathway. Ni-containing acireductone dioxygenase (Ni-ARD) produces methylthiopropionate, carbon monoxide and formate, and does not lie on the methionine recycle pathway. Also down-regulates cell migration mediated by MMP14. The polypeptide is Acireductone dioxygenase (Adi1) (Rattus norvegicus (Rat)).